Consider the following 466-residue polypeptide: Delta-1 crystallin (466 aa).

Belongs to the lyase 1 family. Argininosuccinate lyase subfamily. As to quaternary structure, homotetramer. In terms of tissue distribution, eye lens.

Functionally, delta crystallin, the principal crystallin in embryonic lens, is found only in birds and reptiles. The protein is Delta-1 crystallin (ASL1) of Meleagris gallopavo (Wild turkey).